A 460-amino-acid chain; its full sequence is MLTIYNTLTKSKEVFKPLDGNKVRMYVCGMTVYDYCHLGHGRSMVAFDLITRWLRFSGYDLTYVRNITDIDDKIINRANENGEAFEALTERMIAAMHEDEARLNIKKPDMEPRATDHIPGMHTMIQTLIDKGYAYAPGNGDVYYRVGKFMGYGKLSRKKIEDLRIGARIEVDESKQDPLDFVLWKAAKPGEPSWPSPWGDGRPGWHIECSVMSTCCLGETFDIHGGGSDLEFPHHENEIAQSEAATGKTYANAWMHCGMIRINGEKMSKSLNNFFTIRDVLDKYHPEVVRYLLVASHYRSAINYSEDNLKDAKGALERFYHALKGLPKVAPAGGEAFVERFTQVMNDDFGTPEACAVLFEMVREINRLRESDIDAAAGLAARLKELASVLGVLQLEADDFLQAGAEGRVDGAQVEALIQARLAARANKDWAESDRIRDQITAMGVILEDGKGGTTWRLAD.

Cysteine 28 lines the Zn(2+) pocket. Positions 30-40 (MTVYDYCHLGH) match the 'HIGH' region motif. Zn(2+) contacts are provided by cysteine 209, histidine 234, and glutamate 238. Residues 266–270 (KMSKS) carry the 'KMSKS' region motif. ATP is bound at residue lysine 269.

This sequence belongs to the class-I aminoacyl-tRNA synthetase family. In terms of assembly, monomer. It depends on Zn(2+) as a cofactor.

Its subcellular location is the cytoplasm. The enzyme catalyses tRNA(Cys) + L-cysteine + ATP = L-cysteinyl-tRNA(Cys) + AMP + diphosphate. The chain is Cysteine--tRNA ligase from Pseudomonas fluorescens (strain ATCC BAA-477 / NRRL B-23932 / Pf-5).